The chain runs to 268 residues: Eukaryotic translation initiation factor 3 subunit G-2 (268 aa).

The 79-residue stretch at 187-265 (SAVRISNLSE…LILCVEWSKP (79 aa)) folds into the RRM domain.

It belongs to the eIF-3 subunit G family. As to quaternary structure, component of the eukaryotic translation initiation factor 3 (eIF-3) complex. The eIF-3 complex interacts with pix.

The protein resides in the cytoplasm. RNA-binding component of the eukaryotic translation initiation factor 3 (eIF-3) complex, which is involved in protein synthesis of a specialized repertoire of mRNAs and, together with other initiation factors, stimulates binding of mRNA and methionyl-tRNAi to the 40S ribosome. The eIF-3 complex specifically targets and initiates translation of a subset of mRNAs involved in cell proliferation. This subunit can bind 18S rRNA. The chain is Eukaryotic translation initiation factor 3 subunit G-2 from Drosophila willistoni (Fruit fly).